A 103-amino-acid chain; its full sequence is MSGRGKGGKGLGKGGAKRHRKILRDNIQGITKPAIRRLARRGGVKRISAMIYEETRGVLKTFLEGVIRDAVTYTEHAKRKTVTSLDVVYALKRQGRTLYGFGG.

Residues 1 to 14 (MSGRGKGGKGLGKG) show a composition bias toward gly residues. The interval 1–20 (MSGRGKGGKGLGKGGAKRHR) is disordered. Lysine 6 carries the post-translational modification N6-acetyl-N6-methyllysine; alternate. Residues lysine 6, lysine 9, and lysine 13 each carry the N6-methyllysine; alternate modification. Lysine 13 is modified (N6-acetyl-N6-methyllysine; alternate). The DNA-binding element occupies 17 to 21 (KRHRK). Residue lysine 92 is modified to N6-glutaryllysine.

This sequence belongs to the histone H4 family. In terms of assembly, the nucleosome is a histone octamer containing two molecules each of H2A, H2B, H3 and H4 assembled in one H3-H4 heterotetramer and two H2A-H2B heterodimers. The octamer wraps approximately 147 bp of DNA. Post-translationally, glutarylation at Lys-92 (H4K91glu) destabilizes nucleosomes by promoting dissociation of the H2A-H2B dimers from nucleosomes.

The protein localises to the nucleus. The protein resides in the chromosome. Functionally, core component of nucleosome. Nucleosomes wrap and compact DNA into chromatin, limiting DNA accessibility to the cellular machineries which require DNA as a template. Histones thereby play a central role in transcription regulation, DNA repair, DNA replication and chromosomal stability. DNA accessibility is regulated via a complex set of post-translational modifications of histones, also called histone code, and nucleosome remodeling. In Emericella nidulans (strain FGSC A4 / ATCC 38163 / CBS 112.46 / NRRL 194 / M139) (Aspergillus nidulans), this protein is Histone H4.1 (hhfA).